A 150-amino-acid chain; its full sequence is Alkaline nuclease (150 aa).

It belongs to the baculo-herpesviridae alkaline nuclease family.

This Suid herpesvirus 1 (strain NIA-3) (SuHV-1) protein is Alkaline nuclease (UL12).